We begin with the raw amino-acid sequence, 71 residues long: uncharacterized protein (71 aa).

The first 23 residues, 1-23 (MTLLIILILKYLLCLENLKNISL), serve as a signal peptide directing secretion. Residues Asn-20, Asn-28, Asn-44, and Asn-50 are each glycosylated (N-linked (GlcNAc...) asparagine).

It localises to the secreted. This is an uncharacterized protein from Dictyostelium discoideum (Social amoeba).